The chain runs to 489 residues: Glucose-6-phosphate 1-dehydrogenase (489 aa).

NADP(+) is bound by residues 15–22, Arg49, 86–87, and Lys149; these read GATGDLAK and DV. Substrate-binding residues include His179, Lys183, Glu217, and Asp236. His241 acts as the Proton acceptor in catalysis. Residues Lys341 and Lys346 each coordinate substrate.

The protein belongs to the glucose-6-phosphate dehydrogenase family.

It catalyses the reaction D-glucose 6-phosphate + NADP(+) = 6-phospho-D-glucono-1,5-lactone + NADPH + H(+). The protein operates within carbohydrate degradation; pentose phosphate pathway; D-ribulose 5-phosphate from D-glucose 6-phosphate (oxidative stage): step 1/3. Functionally, catalyzes the oxidation of glucose 6-phosphate to 6-phosphogluconolactone. The chain is Glucose-6-phosphate 1-dehydrogenase from Bacillus subtilis (strain 168).